We begin with the raw amino-acid sequence, 580 residues long: Arginine--tRNA ligase (580 aa).

The 'HIGH' region motif lies at 131–141 (ANPTGPMHVGH).

The protein belongs to the class-I aminoacyl-tRNA synthetase family. As to quaternary structure, monomer.

Its subcellular location is the cytoplasm. It carries out the reaction tRNA(Arg) + L-arginine + ATP = L-arginyl-tRNA(Arg) + AMP + diphosphate. In Cereibacter sphaeroides (strain ATCC 17029 / ATH 2.4.9) (Rhodobacter sphaeroides), this protein is Arginine--tRNA ligase.